A 354-amino-acid polypeptide reads, in one-letter code: Uroporphyrinogen decarboxylase (354 aa).

Substrate contacts are provided by residues 27–31 (RQAGR), D77, Y154, T209, and H327.

This sequence belongs to the uroporphyrinogen decarboxylase family. In terms of assembly, homodimer.

It localises to the cytoplasm. It catalyses the reaction uroporphyrinogen III + 4 H(+) = coproporphyrinogen III + 4 CO2. It functions in the pathway porphyrin-containing compound metabolism; protoporphyrin-IX biosynthesis; coproporphyrinogen-III from 5-aminolevulinate: step 4/4. Catalyzes the decarboxylation of four acetate groups of uroporphyrinogen-III to yield coproporphyrinogen-III. The chain is Uroporphyrinogen decarboxylase from Pseudomonas putida (strain ATCC 700007 / DSM 6899 / JCM 31910 / BCRC 17059 / LMG 24140 / F1).